Reading from the N-terminus, the 324-residue chain is MARRGKKKGRPISGWVIFDKPKGMGSTEAVSKIKWLFSAEKAGHAGTLDPLASGMLPIALGEATKTVPYAMDGTKVYRFTVTWGEERSTDDLEGQPTKTSDKRPSREEVEALLPDYTGVISQVPPQFSAIKIDGERAYDLAREGETVEIPAREVEIDRLEIVGFPDADRTEFEVECSKGTYVRSLARDMGRDLGCYGHISDLRRVEVAPFTDEDMVTLAKLEAVWPPLPPKDEDGNVIEPAPRRDFSALDALVIDTGAALDCLPQVPLSDDQAQRVRLGNPVILRGRDAPLEADEACVTTRGKLLAIGYIEHGQFKPKRVFTAG.

D49 acts as the Nucleophile in catalysis. The interval 87–107 (RSTDDLEGQPTKTSDKRPSRE) is disordered.

It belongs to the pseudouridine synthase TruB family. Type 1 subfamily.

The enzyme catalyses uridine(55) in tRNA = pseudouridine(55) in tRNA. Responsible for synthesis of pseudouridine from uracil-55 in the psi GC loop of transfer RNAs. In Brucella melitensis biotype 1 (strain ATCC 23456 / CCUG 17765 / NCTC 10094 / 16M), this protein is tRNA pseudouridine synthase B.